Here is a 283-residue protein sequence, read N- to C-terminus: Protein-L-isoaspartate O-methyltransferase (283 aa).

Ser-122 is an active-site residue.

This sequence belongs to the methyltransferase superfamily. L-isoaspartyl/D-aspartyl protein methyltransferase family.

Its subcellular location is the cytoplasm. It catalyses the reaction [protein]-L-isoaspartate + S-adenosyl-L-methionine = [protein]-L-isoaspartate alpha-methyl ester + S-adenosyl-L-homocysteine. Functionally, catalyzes the methyl esterification of L-isoaspartyl residues in peptides and proteins that result from spontaneous decomposition of normal L-aspartyl and L-asparaginyl residues. It plays a role in the repair and/or degradation of damaged proteins. This Leptothrix cholodnii (strain ATCC 51168 / LMG 8142 / SP-6) (Leptothrix discophora (strain SP-6)) protein is Protein-L-isoaspartate O-methyltransferase.